The primary structure comprises 148 residues: Nucleoside diphosphate kinase (148 aa).

ATP is bound by residues K9, F57, R85, T91, R102, and N112. T91 carries the phosphothreonine modification. H115 (pros-phosphohistidine intermediate) is an active-site residue. Phosphoserine is present on S122.

It belongs to the NDK family. In terms of assembly, homotetramer. The cofactor is Mg(2+).

The protein resides in the cytoplasm. The enzyme catalyses a 2'-deoxyribonucleoside 5'-diphosphate + ATP = a 2'-deoxyribonucleoside 5'-triphosphate + ADP. It carries out the reaction a ribonucleoside 5'-diphosphate + ATP = a ribonucleoside 5'-triphosphate + ADP. Functionally, major role in the synthesis of nucleoside triphosphates other than ATP. The ATP gamma phosphate is transferred to the NDP beta phosphate via a ping-pong mechanism, using a phosphorylated active-site intermediate. This is Nucleoside diphosphate kinase from Oceanobacillus iheyensis (strain DSM 14371 / CIP 107618 / JCM 11309 / KCTC 3954 / HTE831).